The sequence spans 327 residues: Biotin synthase (327 aa).

In terms of domain architecture, Radical SAM core spans 48–278 (YCGDGVGLCM…DRHITVCGGR (231 aa)). [4Fe-4S] cluster contacts are provided by C66, C70, and C73. Residues S143 and C203 each contribute to the [2Fe-2S] cluster site.

This sequence belongs to the radical SAM superfamily. Biotin synthase family. As to quaternary structure, homodimer. It depends on [4Fe-4S] cluster as a cofactor. The cofactor is [2Fe-2S] cluster.

It catalyses the reaction (4R,5S)-dethiobiotin + (sulfur carrier)-SH + 2 reduced [2Fe-2S]-[ferredoxin] + 2 S-adenosyl-L-methionine = (sulfur carrier)-H + biotin + 2 5'-deoxyadenosine + 2 L-methionine + 2 oxidized [2Fe-2S]-[ferredoxin]. The protein operates within cofactor biosynthesis; biotin biosynthesis; biotin from 7,8-diaminononanoate: step 2/2. Catalyzes the conversion of dethiobiotin (DTB) to biotin by the insertion of a sulfur atom into dethiobiotin via a radical-based mechanism. The polypeptide is Biotin synthase (Syntrophotalea carbinolica (strain DSM 2380 / NBRC 103641 / GraBd1) (Pelobacter carbinolicus)).